A 379-amino-acid chain; its full sequence is UDP-N-acetylglucosamine--N-acetylmuramyl-(pentapeptide) pyrophosphoryl-undecaprenol N-acetylglucosamine transferase (379 aa).

UDP-N-acetyl-alpha-D-glucosamine contacts are provided by residues 13–15 (TGG), Asn123, Arg166, Ser194, and Gln295.

This sequence belongs to the glycosyltransferase 28 family. MurG subfamily.

It is found in the cell inner membrane. The enzyme catalyses di-trans,octa-cis-undecaprenyl diphospho-N-acetyl-alpha-D-muramoyl-L-alanyl-D-glutamyl-meso-2,6-diaminopimeloyl-D-alanyl-D-alanine + UDP-N-acetyl-alpha-D-glucosamine = di-trans,octa-cis-undecaprenyl diphospho-[N-acetyl-alpha-D-glucosaminyl-(1-&gt;4)]-N-acetyl-alpha-D-muramoyl-L-alanyl-D-glutamyl-meso-2,6-diaminopimeloyl-D-alanyl-D-alanine + UDP + H(+). It functions in the pathway cell wall biogenesis; peptidoglycan biosynthesis. Cell wall formation. Catalyzes the transfer of a GlcNAc subunit on undecaprenyl-pyrophosphoryl-MurNAc-pentapeptide (lipid intermediate I) to form undecaprenyl-pyrophosphoryl-MurNAc-(pentapeptide)GlcNAc (lipid intermediate II). This is UDP-N-acetylglucosamine--N-acetylmuramyl-(pentapeptide) pyrophosphoryl-undecaprenol N-acetylglucosamine transferase from Rhodospirillum centenum (strain ATCC 51521 / SW).